Here is a 113-residue protein sequence, read N- to C-terminus: Large ribosomal subunit protein bL19 (113 aa).

The protein belongs to the bacterial ribosomal protein bL19 family.

Its function is as follows. This protein is located at the 30S-50S ribosomal subunit interface and may play a role in the structure and function of the aminoacyl-tRNA binding site. The chain is Large ribosomal subunit protein bL19 from Nocardia farcinica (strain IFM 10152).